Here is a 690-residue protein sequence, read N- to C-terminus: Methionine--tRNA ligase (690 aa).

The short motif at 12–22 (PYANGPLHLGH) is the 'HIGH' region element. Zn(2+) contacts are provided by cysteine 144, cysteine 147, cysteine 157, and cysteine 160. The short motif at 333–337 (QFSKS) is the 'KMSKS' region element. Lysine 336 provides a ligand contact to ATP. One can recognise a tRNA-binding domain in the interval 535 to 632 (KKINIDLMVG…VNADDGSRMK (98 aa)).

The protein belongs to the class-I aminoacyl-tRNA synthetase family. MetG type 1 subfamily. In terms of assembly, homodimer. Requires Zn(2+) as cofactor.

It localises to the cytoplasm. It catalyses the reaction tRNA(Met) + L-methionine + ATP = L-methionyl-tRNA(Met) + AMP + diphosphate. Its function is as follows. Is required not only for elongation of protein synthesis but also for the initiation of all mRNA translation through initiator tRNA(fMet) aminoacylation. This chain is Methionine--tRNA ligase, found in Picrophilus torridus (strain ATCC 700027 / DSM 9790 / JCM 10055 / NBRC 100828 / KAW 2/3).